The sequence spans 276 residues: Tryptophan synthase alpha chain (276 aa).

Residues Glu-46 and Glu-57 each act as proton acceptor in the active site.

The protein belongs to the TrpA family. In terms of assembly, tetramer of two alpha and two beta chains.

It catalyses the reaction (1S,2R)-1-C-(indol-3-yl)glycerol 3-phosphate + L-serine = D-glyceraldehyde 3-phosphate + L-tryptophan + H2O. It functions in the pathway amino-acid biosynthesis; L-tryptophan biosynthesis; L-tryptophan from chorismate: step 5/5. In terms of biological role, the alpha subunit is responsible for the aldol cleavage of indoleglycerol phosphate to indole and glyceraldehyde 3-phosphate. This is Tryptophan synthase alpha chain from Halobacterium salinarum (strain ATCC 29341 / DSM 671 / R1).